The primary structure comprises 541 residues: Formimidoyltransferase-cyclodeaminase (541 aa).

Residues 1–181 (MAKLVECVPN…GATVTGARTF (181 aa)) are formiminotransferase N-subdomain. Catalysis depends on H82, which acts as the For formimidoyltransferase activity. 163 to 172 (GPPAFVPQWG) contributes to the folate binding site. Positions 182 to 326 (LIAYNINLLC…PRERIIEYLV (145 aa)) are formiminotransferase C-subdomain. The tract at residues 327 to 334 (QAGQEDKG) is linker. The interval 335–541 (LVTKPLGAFV…VLALLEKREA (207 aa)) is cyclodeaminase/cyclohydrolase. The active-site For cyclodeaminase activity is D412.

This sequence in the C-terminal section; belongs to the cyclodeaminase/cyclohydrolase family. The protein in the N-terminal section; belongs to the formiminotransferase family. Homooctamer, including four polyglutamate binding sites. The subunits are arranged as a tetramer of dimers, and form a planar ring-shaped structure.

It is found in the cytoplasm. Its subcellular location is the cytosol. It localises to the golgi apparatus. The protein resides in the cytoskeleton. The protein localises to the microtubule organizing center. It is found in the centrosome. Its subcellular location is the centriole. The enzyme catalyses 5-formimidoyltetrahydrofolate + L-glutamate = N-formimidoyl-L-glutamate + (6S)-5,6,7,8-tetrahydrofolate. It catalyses the reaction 5-formimidoyltetrahydrofolate + 2 H(+) = (6R)-5,10-methenyltetrahydrofolate + NH4(+). It participates in amino-acid degradation; L-histidine degradation into L-glutamate; L-glutamate from N-formimidoyl-L-glutamate (transferase route): step 1/1. In terms of biological role, folate-dependent enzyme, that displays both transferase and deaminase activity. Serves to channel one-carbon units from formiminoglutamate to the folate pool. Its function is as follows. Binds and promotes bundling of vimentin filaments originating from the Golgi. In Gallus gallus (Chicken), this protein is Formimidoyltransferase-cyclodeaminase (FTCD).